The chain runs to 313 residues: Thymidylate synthase (313 aa).

The interval 1-28 (MPVAGSELPRRPLPPAAQERDAEPRPPH) is disordered. Over residues 18 to 28 (QERDAEPRPPH) the composition is skewed to basic and acidic residues. Arg50 contacts dUMP. Ser114 is subject to Phosphoserine. Residues 175 to 176 (RR), 195 to 196 (CH), 215 to 218 (RSGD), Asn226, and 256 to 258 (HIY) each bind dUMP. The active-site Nucleophile is the Cys195. Residue Asp218 participates in (6R)-5,10-methylene-5,6,7,8-tetrahydrofolate binding. Glycyl lysine isopeptide (Lys-Gly) (interchain with G-Cter in SUMO2) cross-links involve residues Lys287, Lys292, and Lys308. Ala312 contributes to the (6R)-5,10-methylene-5,6,7,8-tetrahydrofolate binding site.

It belongs to the thymidylate synthase family. In terms of assembly, homodimer.

It is found in the nucleus. It localises to the cytoplasm. Its subcellular location is the mitochondrion. The protein localises to the mitochondrion matrix. The protein resides in the mitochondrion inner membrane. The catalysed reaction is dUMP + (6R)-5,10-methylene-5,6,7,8-tetrahydrofolate = 7,8-dihydrofolate + dTMP. It functions in the pathway pyrimidine metabolism; dTTP biosynthesis. Catalyzes the reductive methylation of 2'-deoxyuridine 5'-monophosphate (dUMP) to thymidine 5'-monophosphate (dTMP), using the cosubstrate, 5,10- methylenetetrahydrofolate (CH2H4folate) as a 1-carbon donor and reductant and contributes to the de novo mitochondrial thymidylate biosynthesis pathway. The polypeptide is Thymidylate synthase (Homo sapiens (Human)).